A 224-amino-acid polypeptide reads, in one-letter code: LexA repressor (224 aa).

Residues 29-49 (RAEIARALGFRSPNAAEDHLK) constitute a DNA-binding region (H-T-H motif). Active-site for autocatalytic cleavage activity residues include serine 142 and lysine 179.

It belongs to the peptidase S24 family. As to quaternary structure, homodimer.

The enzyme catalyses Hydrolysis of Ala-|-Gly bond in repressor LexA.. Its function is as follows. Represses a number of genes involved in the response to DNA damage (SOS response), including recA and lexA. In the presence of single-stranded DNA, RecA interacts with LexA causing an autocatalytic cleavage which disrupts the DNA-binding part of LexA, leading to derepression of the SOS regulon and eventually DNA repair. In Bordetella petrii (strain ATCC BAA-461 / DSM 12804 / CCUG 43448), this protein is LexA repressor.